Consider the following 231-residue polypeptide: Probable glutathione S-transferase GSTU1 (231 aa).

One can recognise a GST N-terminal domain in the interval 5–84; it reads KELVLLDFWV…YLDDAFPGTP (80 aa). Residues Ser-15, Lys-42, Ile-56, and 68–69 contribute to the glutathione site; that span reads ES. One can recognise a GST C-terminal domain in the interval 97-220; sequence AAYARATARF…LPSPEKVYDF (124 aa).

It belongs to the GST superfamily. Tau family.

The enzyme catalyses RX + glutathione = an S-substituted glutathione + a halide anion + H(+). Functionally, conjugation of reduced glutathione to a wide number of exogenous and endogenous hydrophobic electrophiles. The protein is Probable glutathione S-transferase GSTU1 (GSTU1) of Oryza sativa subsp. japonica (Rice).